The primary structure comprises 170 residues: Adenine phosphoribosyltransferase (170 aa).

The protein belongs to the purine/pyrimidine phosphoribosyltransferase family. In terms of assembly, homodimer.

It localises to the cytoplasm. The enzyme catalyses AMP + diphosphate = 5-phospho-alpha-D-ribose 1-diphosphate + adenine. The protein operates within purine metabolism; AMP biosynthesis via salvage pathway; AMP from adenine: step 1/1. Catalyzes a salvage reaction resulting in the formation of AMP, that is energically less costly than de novo synthesis. This is Adenine phosphoribosyltransferase from Mycoplasma capricolum subsp. capricolum (strain California kid / ATCC 27343 / NCTC 10154).